A 111-amino-acid polypeptide reads, in one-letter code: uncharacterized protein (111 aa).

2 helical membrane passes run 7–27 (ILNI…SMMI) and 53–73 (AFAM…TFLH).

It localises to the cell membrane. This is an uncharacterized protein from Bacillus anthracis.